The primary structure comprises 65 residues: Small ribosomal subunit protein bS21B (65 aa).

The protein belongs to the bacterial ribosomal protein bS21 family.

This is Small ribosomal subunit protein bS21B from Francisella tularensis subsp. holarctica (strain LVS).